Reading from the N-terminus, the 525-residue chain is MSL complex subunit 3 (525 aa).

The 60-residue stretch at 13 to 72 (SGEKVLCFEPDPTKARVLYDAKIIDVIIGKDEKGRKIPEYLIHFNGWNRSWDRWAAEEHV) folds into the Tudor-knot domain. Disordered stretches follow at residues 119–148 (KEKSKNDENSVSSTCHESCGEKNGGIKEHR) and 302–383 (TTTT…DTSA). Positions 136 to 146 (SCGEKNGGIKE) are enriched in basic and acidic residues. The MRG domain maps to 172 to 521 (DERTITIDIP…CEAHYSTKNP (350 aa)). The tract at residues 294-444 (FFLPIKESTT…WKLVPDNYPP (151 aa)) is required for the histone acetyltransferase activity of the MSL complex. Phosphoserine is present on residues Ser-313 and Ser-315. A compositionally biased stretch (low complexity) spans 320–332 (NPSTPQSTESQPP). Phosphoserine is present on residues Ser-371 and Ser-404. Phosphothreonine is present on Thr-409. Residues Ser-411 and Ser-415 each carry the phosphoserine modification.

As to quaternary structure, component of the MSL histone acetyltransferase complex at least composed of the KAT8/MOF, MSL1/hampin, MSL2 and MSL3. Interacts (via the MRG domain) with MSL1 and KAT8/MOF. In terms of tissue distribution, in testis, expression is mostly restricted to the spermatocyte stage and only in a small portion of spermatogonia.

The protein resides in the nucleus. In terms of biological role, non-catalytic component of the MSL histone acetyltransferase complex, a multiprotein complex that mediates the majority of histone H4 acetylation at 'Lys-16' (H4K16ac), an epigenetic mark that prevents chromatin compaction. The MSL complex is required for chromosome stability and genome integrity by maintaining homeostatic levels of H4K16ac. The MSL complex is also involved in gene dosage by promoting up-regulation of genes expressed by the X chromosome. X up-regulation is required to compensate for autosomal biallelic expression. The MSL complex also participates in gene dosage compensation by promoting expression of Tsix non-coding RNA. Acts as a histone reader that specifically recognizes and binds histone H4 monomethylated at 'Lys-20' (H4K20Me1) in a DNA-dependent manner and is proposed to be involved in chromosomal targeting of the MSL complex. May play a role X inactivation in females. This Mus musculus (Mouse) protein is MSL complex subunit 3.